The following is a 367-amino-acid chain: Aflatoxin B1 aldehyde reductase member 2 (367 aa).

A mitochondrion-targeting transit peptide spans 1 to 46 (MLRAVSRAVSRAAVRCAWRSGPSVARPLAMSRSPAPRAVSGAPLRP). The tract at residues 27-46 (PLAMSRSPAPRAVSGAPLRP) is disordered. S40 carries the post-translational modification Phosphoserine. At T48 the chain carries Phosphothreonine. D80 is a binding site for NADP(+). Y85 (proton donor) is an active-site residue. K136 carries the post-translational modification N6-acetyllysine. Position 149 (H149) interacts with substrate. Residues 179–180 (SN), Q205, 234–244 (NPLAGGLLTGK), and R258 each bind NADP(+). K244 is subject to N6-succinyllysine. S263 bears the Phosphoserine mark. The substrate site is built by Y268 and R271. 326–334 (SSLEQLEQN) contacts NADP(+). Residue R367 coordinates substrate.

It belongs to the aldo/keto reductase family. Aldo/keto reductase 2 subfamily. Homodimer. Heterodimer with AKR7A1.

It localises to the mitochondrion. The protein resides in the golgi apparatus. It is found in the golgi stack. The protein localises to the cytoplasm. The enzyme catalyses 4-hydroxybutanoate + NADP(+) = succinate semialdehyde + NADPH + H(+). Its function is as follows. Catalyzes the NADPH-dependent reduction of succinic semialdehyde to gamma-hydroxybutyrate. May have an important role in producing the neuromodulator gamma-hydroxybutyrate (GHB). Has broad substrate specificity. Can reduce the dialdehyde protein-binding form of aflatoxin B1 (AFB1) to the non-binding AFB1 dialcohol. Acts as a 2-carboxybenzaldehyde reductase. This chain is Aflatoxin B1 aldehyde reductase member 2 (Akr7a2), found in Rattus norvegicus (Rat).